A 7182-amino-acid chain; its full sequence is Replicase polyprotein 1ab (7182 aa).

The CoV Nsp1 globular domain occupies 25–151 (RTDHVSLKAS…EFQFLLRKKG (127 aa)). Residues 159-195 (DAPWDYNWTPYSDLMDALEADPCGKYSQSLLKKLVGG) form the BetaCoV Nsp1 C-terminal domain. Residues 197–473 (FTPIDQYMCG…WSKVCETANL (277 aa)) form the CoV Nsp2 N-terminal domain. Zn(2+) contacts are provided by Cys-340, Cys-343, Cys-359, and Cys-361. Positions 340 to 361 (CTSCGKGSWLTGNAVQGFACDC) are C4. In terms of domain architecture, CoV Nsp2 middle spans 479 to 713 (QHAINFVNEF…MHILSKAMQL (235 aa)). Residues 715-851 (HTTVSWAGSK…VPTLFRLKGG (137 aa)) enclose the CoV Nsp2 C-terminal domain. Positions 855 to 964 (KGVKFGGEQT…MTFSVNPVEE (110 aa)) constitute a Ubiquitin-like 1 domain. 2 consecutive Macro domains span residues 1186–1345 (PLKN…KVYN) and 1354–1480 (TGLT…AVQT). Residues 1480–1553 (TPEQSFINTV…LEKCRTYLTS (74 aa)) form the DPUP domain. Residues 1558–1613 (QKNVDVLVTIDGVNFRTVVLNNTTTYRVQLGSVFYKGSDISDTIPTEKMSGEAVYL) enclose the Ubiquitin-like 2 domain. A Peptidase C16 domain is found at 1628–1902 (VYGTADTAFL…WADVDPDLSA (275 aa)). Residue Cys-1668 is the For PL-PRO activity of the active site. Zn(2+) contacts are provided by Cys-1748, Cys-1751, Cys-1783, and Cys-1785. The segment at 1748–1785 (CNVCGVQDTTTTGLKACIYVGMNSLDELHATHEECCQC) adopts a C4-type zinc-finger fold. Residues His-1838 and Asp-1853 each act as for PL-PRO activity in the active site. The region spanning 1916 to 2033 (VIEYSPATIL…QVYDIAPVTL (118 aa)) is the Nucleic acid-binding domain. A G2M domain is found at 2059-2179 (PQSPVQVAED…ASVTVNVTTA (121 aa)). 3 helical membrane passes run 2158–2178 (ILLG…NVTT), 2196–2216 (GIIG…FTFW), and 2268–2288 (LLFL…LFLF). The segment at 2158 to 2441 (ILLGASSLFA…VTHIPLLGLV (284 aa)) is HD1. Residues 2305-2371 (LATYRELRSY…FQMIQTHVTS (67 aa)) form the 3Ecto domain. 2 cysteine pairs are disulfide-bonded: Cys-2321–Cys-2349 and Cys-2339–Cys-2346. Transmembrane regions (helical) follow at residues 2372 to 2392 (YVIN…YVLY), 2396 to 2416 (FNVL…GAFV), and 2421 to 2441 (YNYL…LGLV). The tract at residues 2455 to 2545 (RFYNHVINGC…SLRRLVKPTD (91 aa)) is Y1. Positions 2455-2828 (RFYNHVINGC…LSVKFSATKL (374 aa)) constitute a CoV Nsp3 Y domain. 8 residues coordinate Zn(2+): His-2459, Cys-2464, Cys-2469, Cys-2472, Cys-2505, His-2508, Cys-2512, and Cys-2515. The ZF1 stretch occupies residues 2459 to 2472 (HVINGCKDTACLLC). The tract at residues 2505–2515 (CCRHNWNCVDC) is ZF2. Residues 2546–2644 (KSHYYVESVT…LVDSNMVTTV (99 aa)) form a Y2 region. A coV-Y region spans residues 2546 to 2828 (KSHYYVESVT…LSVKFSATKL (283 aa)). The segment at 2645–2727 (GDSREIASKM…DALQYAYKHD (83 aa)) is Y3. Residues 2728–2828 (LQLTTEGFNN…LSVKFSATKL (101 aa)) are Y4. Transmembrane regions (helical) follow at residues 2848 to 2868 (CVVT…LPAF), 3119 to 3139 (STSL…FYYV), 3152 to 3172 (CAVV…FVVS), and 3203 to 3223 (WFVM…IVGV). The interval 2848 to 3223 (CVVTLVVFAM…WMVFAYIVGV (376 aa)) is HD2. A Nsp4C domain is found at 3242 to 3338 (VFTDGKLNCS…NCSVTSSVLQ (97 aa)). Positions 3339–3644 (SGLVKMAAPS…NMQVMGVVMQ (306 aa)) constitute a Peptidase C30 domain. Catalysis depends on for 3CL-PRO activity residues His-3379 and Cys-3486. The next 7 helical transmembrane spans lie at 3650–3670 (ISYG…VATL), 3684–3704 (VIPL…MLTV), 3709–3729 (TFLT…NIVY), 3760–3777 (LGVY…VRRL), 3782–3802 (ASNL…YTTG), 3823–3843 (VTVF…FLYA), and 3855–3875 (LVLL…GVFS). The HD3 stretch occupies residues 3650–3875 (ISYGLVHWLF…FCTVYFGVFS (226 aa)). Positions 3937–4019 (SKLTDLKCTS…DLLDHPSVLQ (83 aa)) constitute a RdRp Nsp7 cofactor domain. Residues 4020-4218 (ATLSEFSHLA…RAASSAVTLQ (199 aa)) enclose the RdRp Nsp8 cofactor domain. In terms of domain architecture, Nsp9 ssRNA-binding spans 4219 to 4328 (NNEIRPSGLK…GHIAATVRLQ (110 aa)). The ExoN/MTase coactivator domain maps to 4329-4467 (AGSNTEFAIN…DALRGTTIPQ (139 aa)). Positions 4402, 4405, 4411, 4418, 4444, 4447, 4455, and 4457 each coordinate Zn(2+). 2 zinc fingers span residues 4402 to 4418 (CLYC…TGVC) and 4444 to 4457 (CNVC…GCNC). Residues 4473 to 4730 (FLNRVRGSIV…AAETHRDCDL (258 aa)) enclose the NiRAN domain. Mn(2+)-binding residues include Asn-4678 and Asp-4687. The Nsp12 Interface domain maps to 4735-4833 (IEWPLLEYDY…MNMDVSLHRH (99 aa)). 5 residues coordinate Zn(2+): His-4764, Cys-4770, Cys-4775, Cys-4779, and Cys-4956. Positions 4834-5401 (RLSLKELMMY…DLYTAPTTLQ (568 aa)) constitute a Nsp12 RNA-dependent RNA polymerase domain. The interval 4836-5050 (SLKELMMYAA…HQKMLKSMAA (215 aa)) is rdRp Fingers N-ter. The tract at residues 5051–5089 (TRGSTCVIGTTKFYGGWDFMLKTLYKDVDNPHLMGWDYP) is rdRp Palm N-ter. The RdRp catalytic domain occupies 5081 to 5243 (PHLMGWDYPK…CYNSDYATKG (163 aa)). The tract at residues 5090–5148 (KCDRAMPNMCRIFASLILARKHSTCCTNTDRFYRLANECAQVLSEYVLCGGGYYVKPGG) is rdRp Fingers C-ter. Residues His-5111, Cys-5114, and Cys-5115 each coordinate Zn(2+). A rdRp Palm C-ter region spans residues 5149–5284 (TSSGDATTAY…KKGPHEFCSQ (136 aa)). Active-site residues include Ser-5228, Asp-5229, and Asp-5230. Residues 5285–5401 (HTLFIKDGDD…DLYTAPTTLQ (117 aa)) are rdRp Thumb. The region spanning 5402-5514 (AVGSCVVCHS…TEFNRLATCD (113 aa)) is the CV ZBD domain. Positions 5406, 5409, 5417, 5420, 5427, 5430, 5434, 5440, 5451, 5456, 5473, and 5476 each coordinate Zn(2+). The region spanning 5658 to 5839 (TVPEEFANHV…MCNLGPDIFL (182 aa)) is the (+)RNA virus helicase ATP-binding domain. An ATP-binding site is contributed by 5683–5690 (GPPGTGKS). The 175-residue stretch at 5840–6014 (SVCYRCPEEI…GLYKDCSRES (175 aa)) folds into the (+)RNA virus helicase C-terminal domain. The ExoN domain maps to 6071-6286 (LFITRDEAIR…RCLAIHDCFI (216 aa)). Active-site residues include Asp-6089, Glu-6091, and Glu-6190. Residues Cys-6206, Cys-6209, Cys-6225, His-6228, His-6256, Cys-6260, and His-6263 each contribute to the Zn(2+) site. Residues His-6267 and Asp-6272 contribute to the active site. Cys-6278 serves as a coordination point for Zn(2+). One can recognise an N7-MTase domain in the interval 6295-6523 (YPYISHEKRL…NLWSTFTKIQ (229 aa)). Position 6330–6336 (6330–6336 (DIGNPKG)) interacts with S-adenosyl-L-methionine. A gpppA-binding region spans residues 6409–6423 (CDGGSLYVNKHAFHT). Residues Cys-6447, Cys-6469, Cys-6480, and His-6483 each coordinate Zn(2+). The Nsp15 N-terminal oligomerization domain occupies 6524–6584 (GLENIAYNVI…NIAFELYAKR (61 aa)). Residues 6585 to 6715 (AVRSHPDFNL…IYKKVNNEFV (131 aa)) enclose the AV-Nsp11N/CoV-Nsp15M domain. The 140-residue stretch at 6732–6871 (TPVSEMEKDF…KDGQVQTFYP (140 aa)) folds into the NendoU domain. Residues His-6762, His-6777, Lys-6817, Lys-6920, Asp-7004, Lys-7044, and Glu-7077 contribute to the active site. The region spanning 6876–7170 (INDWKPGLAM…TLSVSTDVLV (295 aa)) is the Nidovirus-type SAM-dependent 2'-O-MTase domain.

This sequence belongs to the coronaviruses polyprotein 1ab family. In terms of assembly, interacts with host PHB and PHB2. As to quaternary structure, interacts with papain-like protease nsp3 and non-structural protein 6. Monomer. Homodimer. Only the homodimer shows catalytic activity. In terms of assembly, interacts with nsp8 and nsp12 to form the replication-transcription complex (RTC): nsp12, nsp7, two subunits of nsp8, and up to two subunits of nsp13. As to quaternary structure, interacts with nsp7, nsp13 and nsp12 to form the replication-transcription complex (RTC): nsp12, nsp7, two subunits of nsp8, and up to two subunits of nsp13. Interacts with nsp12. In terms of assembly, interacts with proofreading exoribonuclease nsp14 and 2'-O-methyltransferase nsp16; these interactions enhance nsp14 and nsp16 enzymatic activities. As to quaternary structure, interacts with nsp7 and nsp8 to form the replication-transcription complex (RTC): nsp12, nsp7, two subunits of nsp8, and up to two subunits of nsp13. Interacts with nsp9. Interacts with nsp8 to form the replication-transcription complex (RTC): nsp12, nsp7, two subunits of nsp8, and up to two subunits of nsp13. The cofactor is Mn(2+). Mg(2+) serves as cofactor. Specific enzymatic cleavages in vivo by its own proteases yield mature proteins. 3CL-PRO and PL-PRO proteinases are autocatalytically processed.

The protein localises to the host membrane. Its subcellular location is the host cytoplasm. It localises to the host perinuclear region. It is found in the host endoplasmic reticulum-Golgi intermediate compartment. The catalysed reaction is RNA(n) + a ribonucleoside 5'-triphosphate = RNA(n+1) + diphosphate. The enzyme catalyses ATP + H2O = ADP + phosphate + H(+). It catalyses the reaction Thiol-dependent hydrolysis of ester, thioester, amide, peptide and isopeptide bonds formed by the C-terminal Gly of ubiquitin (a 76-residue protein attached to proteins as an intracellular targeting signal).. It carries out the reaction a 5'-end (N(7)-methyl 5'-triphosphoguanosine)-ribonucleoside in mRNA + S-adenosyl-L-methionine = a 5'-end (N(7)-methyl 5'-triphosphoguanosine)-(2'-O-methyl-ribonucleoside) in mRNA + S-adenosyl-L-homocysteine + H(+). The catalysed reaction is uridylyl-uridylyl-ribonucleotide-RNA = a 3'-end uridylyl-2',3'-cyclophospho-uridine-RNA + a 5'-end dephospho-ribonucleoside-RNA. The enzyme catalyses a 5'-end diphospho-ribonucleoside in mRNA + GTP + H(+) = a 5'-end (5'-triphosphoguanosine)-ribonucleoside in mRNA + diphosphate. It catalyses the reaction a 5'-end (5'-triphosphoguanosine)-ribonucleoside in mRNA + S-adenosyl-L-methionine = a 5'-end (N(7)-methyl 5'-triphosphoguanosine)-ribonucleoside in mRNA + S-adenosyl-L-homocysteine. Functionally, the replicase polyprotein of coronaviruses is a multifunctional protein: it contains the activities necessary for the transcription of negative stranded RNA, leader RNA, subgenomic mRNAs and progeny virion RNA as well as proteinases responsible for the cleavage of the polyprotein into functional products. In terms of biological role, inhibits host translation by interacting with the 40S ribosomal subunit. The nsp1-40S ribosome complex further induces an endonucleolytic cleavage near the 5'UTR of host mRNAs, targeting them for degradation. Viral mRNAs are not susceptible to nsp1-mediated endonucleolytic RNA cleavage thanks to the presence of a 5'-end leader sequence and are therefore protected from degradation. By suppressing host gene expression, nsp1 facilitates efficient viral gene expression in infected cells and evasion from host immune response. Its function is as follows. May play a role in the modulation of host cell survival signaling pathway by interacting with host PHB and PHB2. Indeed, these two proteins play a role in maintaining the functional integrity of the mitochondria and protecting cells from various stresses. Responsible for the cleavages located at the N-terminus of the replicase polyprotein. In addition, PL-PRO possesses a deubiquitinating/deISGylating activity and processes both 'Lys-48'- and 'Lys-63'-linked polyubiquitin chains from cellular substrates. Participates together with nsp4 in the assembly of virally-induced cytoplasmic double-membrane vesicles necessary for viral replication. Antagonizes innate immune induction of type I interferon by blocking the phosphorylation, dimerization and subsequent nuclear translocation of host IRF3. Also prevents host NF-kappa-B signaling. Functionally, participates in the assembly of virally-induced cytoplasmic double-membrane vesicles necessary for viral replication. In terms of biological role, cleaves the C-terminus of replicase polyprotein at 11 sites. Recognizes substrates containing the core sequence [ILMVF]-Q-|-[SGACN]. Also able to bind an ADP-ribose-1''-phosphate (ADRP). Its function is as follows. Plays a role in the initial induction of autophagosomes from host endoplasmic reticulum. Later, limits the expansion of these phagosomes that are no longer able to deliver viral components to lysosomes. Forms a hexadecamer with nsp8 (8 subunits of each) that may participate in viral replication by acting as a primase. Alternatively, may synthesize substantially longer products than oligonucleotide primers. Functionally, forms a hexadecamer with nsp7 (8 subunits of each) that may participate in viral replication by acting as a primase. Alternatively, may synthesize substantially longer products than oligonucleotide primers. In terms of biological role, forms a primer, NSP9-pU, which is utilized by the polymerase for the initiation of RNA chains. Interacts with ribosome signal recognition particle RNA (SRP). Together with NSP8, suppress protein integration into the cell membrane, thereby disrupting host immune defenses. Its function is as follows. Plays a pivotal role in viral transcription by stimulating both nsp14 3'-5' exoribonuclease and nsp16 2'-O-methyltransferase activities. Therefore plays an essential role in viral mRNAs cap methylation. RNA-directed RNA polymerase that catalyzes the transcription of viral genomic and subgenomic RNAs. Acts in complex with nsp7 and nsp8 to transcribe both the minus and positive strands of genomic RNA. The kinase-like NiRAN domain of NSP12 attaches one or more nucleotides to the amino terminus of NSP9, forming a covalent RNA-protein intermediate that serves as transcription/replication primer. Subgenomic RNAs (sgRNAs) are formed by discontinuous transcription: The polymerase has the ability to pause at transcription-regulating sequences (TRS) and jump to the leader TRS, resulting in a major deletion. This creates a series of subgenomic RNAs that are replicated, transcribed and translated. In addition, Nsp12 is a subunit of the viral RNA capping enzyme that catalyzes the RNA guanylyltransferase reaction for genomic and sub-genomic RNAs. Subsequently, the NiRAN domain transfers RNA to GDP, and forms the core cap structure GpppA-RNA. Functionally, multi-functional protein with a zinc-binding domain in N-terminus displaying RNA and DNA duplex-unwinding activities with 5' to 3' polarity. Activity of helicase is dependent on magnesium. In terms of biological role, plays a role in viral RNA synthesis through two distinct activities. The N7-guanine methyltransferase activity plays a role in the formation of the cap structure GpppA-RNA. The proofreading exoribonuclease reduces the sensitivity of the virus to RNA mutagens during replication. This activity acts on both ssRNA and dsRNA in a 3'-5' direction. Its function is as follows. Plays a role in viral transcription/replication and prevents the simultaneous activation of host cell dsRNA sensors, such as MDA5/IFIH1, OAS, and PKR. Acts by degrading the 5'-polyuridines generated during replication of the poly(A) region of viral genomic and subgenomic RNAs. Catalyzes a two-step reaction in which a 2'3'-cyclic phosphate (2'3'-cP) is first generated by 2'-O transesterification, which is then hydrolyzed to a 3'-phosphate (3'-P). If not degraded, poly(U) RNA would hybridize with poly(A) RNA tails and activate host dsRNA sensors. Methyltransferase that mediates mRNA cap 2'-O-ribose methylation to the 5'-cap structure of viral mRNAs. N7-methyl guanosine cap is a prerequisite for binding of nsp16. Therefore plays an essential role in viral mRNAs cap methylation which is essential to evade immune system. This Pipistrellus abramus (Japanese pipistrelle) protein is Replicase polyprotein 1ab (rep).